The sequence spans 581 residues: MKASQFFISTLKEAPADAEVVSHQLMMRAGLIKKLGAGIYNYMPMGLRVIRKVEAIVREEMNRAGAVECTMPVVQPAELWQETGRFDKMGPELLRIHDRHGRDFVIQPTSEEVVTDIARQELRSYKQLPKNLYQIQTKFRDERRPRFGLMRGREFIMKDAYSFDRDQAGAKASYQVMAQAYRRIFDRFGLRYRAVAADSGAIGGDLSEEFQVIAATGEDAIVYCPASDYAANMEKAEALAPAGARPAAKQPLTVTPTPGKSTCADVAELLSVPLSTTVKSLVLATDETDAAGEIIRSQVWLLLLRGDHDMNEIKVAKVPGLDAGFRFATVAEIADHFGCKPGYLGPLNLQKPVKLVVDRDVAVMADWICGANQEGHHITGVNWGRDLPEPDMVADLRNVVAGDLSPDGQGELAIERGIEVGHVFYLGTKYSKAMNATFLGEDGKPAFFEMGCYGIGVTRLPAAAIEQNHDERGIIWPDAIAPFTVVICPVGMDRSEAVKAQAESLYADLLAAGVDVILDDRGERPGAMFADWELIGVPHRVTIGDKSLKEGQVEYQHRRDASATKVGVADILAHVKERLAA.

The protein belongs to the class-II aminoacyl-tRNA synthetase family. ProS type 1 subfamily. Homodimer.

It localises to the cytoplasm. The enzyme catalyses tRNA(Pro) + L-proline + ATP = L-prolyl-tRNA(Pro) + AMP + diphosphate. Functionally, catalyzes the attachment of proline to tRNA(Pro) in a two-step reaction: proline is first activated by ATP to form Pro-AMP and then transferred to the acceptor end of tRNA(Pro). As ProRS can inadvertently accommodate and process non-cognate amino acids such as alanine and cysteine, to avoid such errors it has two additional distinct editing activities against alanine. One activity is designated as 'pretransfer' editing and involves the tRNA(Pro)-independent hydrolysis of activated Ala-AMP. The other activity is designated 'posttransfer' editing and involves deacylation of mischarged Ala-tRNA(Pro). The misacylated Cys-tRNA(Pro) is not edited by ProRS. The chain is Proline--tRNA ligase from Acidovorax ebreus (strain TPSY) (Diaphorobacter sp. (strain TPSY)).